Reading from the N-terminus, the 190-residue chain is MKNVTDSFLSLGHWPFAGSFGFFNTDILSTNLINLSVVLGVLIFFGKGVCASCLLSDLLDNRKQRILNTIRNSEELRGGAIEQLEKARTRLRKVEMEADQFRVNGYSEIEREKLNLINSIYKTLEQLENYKNETIQFEQQRTINQVRQRVFQQALQGALGTLNSCLNNELHLRTISANIGILGSIKEKTD.

Residues 35–55 form a helical membrane-spanning segment; it reads LSVVLGVLIFFGKGVCASCLL.

This sequence belongs to the ATPase B chain family. As to quaternary structure, F-type ATPases have 2 components, F(1) - the catalytic core - and F(0) - the membrane proton channel. F(1) has five subunits: alpha(3), beta(3), gamma(1), delta(1), epsilon(1). F(0) has four main subunits: a(1), b(1), b'(1) and c(10-14). The alpha and beta chains form an alternating ring which encloses part of the gamma chain. F(1) is attached to F(0) by a central stalk formed by the gamma and epsilon chains, while a peripheral stalk is formed by the delta, b and b' chains.

The protein resides in the plastid. Its subcellular location is the chloroplast thylakoid membrane. Functionally, f(1)F(0) ATP synthase produces ATP from ADP in the presence of a proton or sodium gradient. F-type ATPases consist of two structural domains, F(1) containing the extramembraneous catalytic core and F(0) containing the membrane proton channel, linked together by a central stalk and a peripheral stalk. During catalysis, ATP synthesis in the catalytic domain of F(1) is coupled via a rotary mechanism of the central stalk subunits to proton translocation. Component of the F(0) channel, it forms part of the peripheral stalk, linking F(1) to F(0). In Coffea arabica (Arabian coffee), this protein is ATP synthase subunit b, chloroplastic.